A 158-amino-acid chain; its full sequence is Transcription elongation factor GreA (158 aa).

Belongs to the GreA/GreB family.

Functionally, necessary for efficient RNA polymerase transcription elongation past template-encoded arresting sites. The arresting sites in DNA have the property of trapping a certain fraction of elongating RNA polymerases that pass through, resulting in locked ternary complexes. Cleavage of the nascent transcript by cleavage factors such as GreA or GreB allows the resumption of elongation from the new 3'terminus. GreA releases sequences of 2 to 3 nucleotides. This Rhizobium johnstonii (strain DSM 114642 / LMG 32736 / 3841) (Rhizobium leguminosarum bv. viciae) protein is Transcription elongation factor GreA.